The chain runs to 625 residues: DELLA protein SLR1 (625 aa).

The tract at residues 1 to 34 (MKREYQEAGGSSGGGSSADMGSCKDKVMAGAAGE) is disordered. Positions 39-43 (DELLA) match the DELLA motif motif. The interval 167–208 (TADPSAADSARDTKRMRTGGGSTSSSSSSSSSLGGGASRGSV) is disordered. A compositionally biased stretch (low complexity) spans 189-198 (TSSSSSSSSS). Positions 232-621 (VDTQEAGIRL…RPLIATSAWR (390 aa)) constitute a GRAS domain. Residues 239-294 (IRLVHALLACAEAVQQENFAAAEALVKQIPTLAASQGGAMRKVAAYFGEALARRVY) form a leucine repeat I (LRI) region. Positions 241–278 (LVHALLACAEAVQQENFAAAEALVKQIPTLAASQGGAM) are required for possible homodimerization. A LxCxE motif motif is present at residues 246–250 (LACAE). A VHIID region spans residues 313–378 (HAHFYESCPY…GGPPSFRLTG (66 aa)). Positions 344–348 (VHVVD) match the VHIID motif. Residues 392–431 (QVGWKLAQFAHTIRVDFQYRGLVAATLADLEPFMLQPEGE) form a leucine repeat II (LRII) region. A PFYRE region spans residues 441 to 542 (IAVNSVFELH…EVYLGRQICN (102 aa)). Positions 449–453 (LHRLL) match the LXXLL motif motif. The interval 545-621 (ACEGAERTER…RPLIATSAWR (77 aa)) is SAW.

The protein belongs to the GRAS family. DELLA subfamily.

Functionally, probable transcriptional regulator that acts as a repressor of the gibberellin (GA) signaling pathway. Probably acts by participating in large multiprotein complexes that repress transcription of GA-inducible genes. Upon GA application, it is degraded by the proteasome, allowing the GA signaling pathway. In contrast, its overexpression prevents the GA signaling pathway and induces a dwarf phenotype. This chain is DELLA protein SLR1, found in Oryza sativa subsp. indica (Rice).